A 26-amino-acid polypeptide reads, in one-letter code: Melittin (26 aa).

Gly-1 carries the post-translational modification N-formylglycine; partial. Glu-26 is subject to Glutamic acid 1-amide.

The protein belongs to the melittin family. As to quaternary structure, monomer (in solution and for integration into membranes), homotetramer (in solution and potentially as a toroidal pore in membranes), and potenially homomultimer (as a toroidal pore in membranes). In terms of tissue distribution, expressed by the venom gland.

Its subcellular location is the secreted. The protein resides in the target cell membrane. Main toxin of bee venom with strong hemolytic activity and antimicrobial activity. It has enhancing effects on bee venom phospholipase A2 activity. This amphipathic toxin binds to negatively charged membrane surface and forms pore by inserting into lipid bilayers inducing the leakage of ions and molecules and the enhancement of permeability that ultimately leads to cell lysis. It acts as a voltage-gated pore with higher selectivity for anions over cations. The ion conductance has been shown to be voltage-dependent. Self-association of melittin in membranes is promoted by high ionic strength, but not by the presence of negatively charged lipids. In vivo, intradermal injection into healthy human volunteers produce sharp pain sensation and an inflammatory response. It produces pain by activating primary nociceptor cells directly and indirectly due to its ability to activate plasma membrane phospholipase A2 and its pore-forming activity. The chain is Melittin (MELT) from Apis dorsata (Giant honeybee).